We begin with the raw amino-acid sequence, 652 residues long: Phosphomethylpyrimidine synthase (652 aa).

Residues Asn-257, Met-286, Tyr-315, His-351, 371–373 (SRG), 412–415 (DGLR), and Glu-451 contribute to the substrate site. His-455 contacts Zn(2+). Residue Tyr-478 participates in substrate binding. Residue His-519 participates in Zn(2+) binding. [4Fe-4S] cluster contacts are provided by Cys-599, Cys-602, and Cys-607.

It belongs to the ThiC family. Homodimer. [4Fe-4S] cluster serves as cofactor.

The catalysed reaction is 5-amino-1-(5-phospho-beta-D-ribosyl)imidazole + S-adenosyl-L-methionine = 4-amino-2-methyl-5-(phosphooxymethyl)pyrimidine + CO + 5'-deoxyadenosine + formate + L-methionine + 3 H(+). It functions in the pathway cofactor biosynthesis; thiamine diphosphate biosynthesis. Catalyzes the synthesis of the hydroxymethylpyrimidine phosphate (HMP-P) moiety of thiamine from aminoimidazole ribotide (AIR) in a radical S-adenosyl-L-methionine (SAM)-dependent reaction. The protein is Phosphomethylpyrimidine synthase of Thiobacillus denitrificans (strain ATCC 25259 / T1).